A 531-amino-acid polypeptide reads, in one-letter code: Aspartate--tRNA ligase, cytoplasmic (531 aa).

The disordered stretch occupies residues 1 to 45 (MADAAEGEQPKLSKKELNKLARKAKKDEKAGEKGGNQQQAAAMDQ). Residues 8-32 (EQPKLSKKELNKLARKAKKDEKAGE) are compositionally biased toward basic and acidic residues. An L-aspartate-binding site is contributed by E259. The tract at residues 281–284 (QLYK) is aspartate. Position 303 (R303) interacts with L-aspartate. Residues 303 to 305 (RAE), 311 to 313 (RHM), and E454 each bind ATP. 2 residues coordinate L-aspartate: S457 and R461. 502-505 (GLER) contributes to the ATP binding site.

Belongs to the class-II aminoacyl-tRNA synthetase family. Type 2 subfamily. In terms of assembly, homodimer.

The protein localises to the cytoplasm. The catalysed reaction is tRNA(Asp) + L-aspartate + ATP = L-aspartyl-tRNA(Asp) + AMP + diphosphate. This Caenorhabditis elegans protein is Aspartate--tRNA ligase, cytoplasmic.